Reading from the N-terminus, the 294-residue chain is MWASFPRPEAIPPGYVGETQHQHRSIMLLNGKSRSWIFLYERLPAPSHDRVKCIAEDVIEFADSFADWSIWNNTKLEDVVDHSTAGMSNLEEGIVKNFSHGRIVLVGDACHKFTSNAGLGLNNGIQDIVAGCNSIRKVVTESGFDLPDVKALEATFKTYYEMRLGPFNDDFIHSKMMTRMQAWANTWYFLFTRYLFFIFSEWILFRFTMLRRVCTGLVLTMHLAKSRLVALLNGFIRSGYHSFIWISAIRPCNDQLLNQLLAGAIQIEILCSLNTWRISSCRAPLLLVFDQARG.

Aspartate 108 is a binding site for FAD.

This sequence belongs to the paxM FAD-dependent monooxygenase family. Requires FAD as cofactor.

The protein operates within mycotoxin biosynthesis. FAD-dependent monooxygenase; part of the satratoxin SC1 cluster involved in the biosynthesis of satratoxins, trichothecene mycotoxins that are associated with human food poisonings. Satratoxins are suggested to be made by products of multiple gene clusters (SC1, SC2 and SC3) that encode 21 proteins in all, including polyketide synthases, acetyltransferases, and other enzymes expected to modify the trichothecene skeleton. SC1 encodes 10 proteins, SAT1 to SAT10. The largest are SAT8, which encodes a putative polyketide synthase (PKS) with a conventional non-reducing architecture, and SAT10, a putative protein containing four ankyrin repeats and thus may be involved in protein scaffolding. The putative short-chain reductase SAT3 may assist the PKS in some capacity. SAT6 contains a secretory lipase domain and acts probably as a trichothecene esterase. SAT5 encodes a putative acetyltransferase, and so, with SAT6, may affect endogenous protection from toxicity. The probable transcription factor SAT9 may regulate the expression of the SC1 cluster. SC2 encodes proteins SAT11 to SAT16, the largest of which encodes the putative reducing PKS SAT13. SAT11 is a cytochrome P450 monooxygenase, while SAT14 and SAT16 are probable acetyltransferases. The SC2 cluster may be regulated by the transcription factor SAT15. SC3 is a small cluster that encodes 5 proteins, SAT17 to SAT21. SAT21 is a putative MFS-type transporter which may have a role in exporting secondary metabolites. The four other proteins putatively encoded in SC3 include the taurine hydroxylase-like protein SAT17, the O-methyltransferase SAT18, the acetyltransferase SAT19, and the Cys6-type zinc finger SAT20, the latter being probably involved in regulation of SC3 expression. The sequence is that of FAD-dependent monooxygenase SAT1 from Stachybotrys chartarum (strain CBS 109288 / IBT 7711) (Toxic black mold).